The chain runs to 394 residues: 1-deoxy-D-xylulose 5-phosphate reductoisomerase (394 aa).

NADPH-binding residues include Thr12, Gly13, Ser14, Ile15, Gly38, and Asn126. Lys127 lines the 1-deoxy-D-xylulose 5-phosphate pocket. Glu128 contributes to the NADPH binding site. Residue Asp151 participates in Mn(2+) binding. Positions 152, 153, 177, and 200 each coordinate 1-deoxy-D-xylulose 5-phosphate. Glu153 provides a ligand contact to Mn(2+). Residue Gly206 participates in NADPH binding. 1-deoxy-D-xylulose 5-phosphate-binding residues include Ser213, Asn218, Lys219, and Glu222. Glu222 serves as a coordination point for Mn(2+).

The protein belongs to the DXR family. Mg(2+) is required as a cofactor. The cofactor is Mn(2+).

The catalysed reaction is 2-C-methyl-D-erythritol 4-phosphate + NADP(+) = 1-deoxy-D-xylulose 5-phosphate + NADPH + H(+). The protein operates within isoprenoid biosynthesis; isopentenyl diphosphate biosynthesis via DXP pathway; isopentenyl diphosphate from 1-deoxy-D-xylulose 5-phosphate: step 1/6. Its function is as follows. Catalyzes the NADPH-dependent rearrangement and reduction of 1-deoxy-D-xylulose-5-phosphate (DXP) to 2-C-methyl-D-erythritol 4-phosphate (MEP). The chain is 1-deoxy-D-xylulose 5-phosphate reductoisomerase from Beutenbergia cavernae (strain ATCC BAA-8 / DSM 12333 / CCUG 43141 / JCM 11478 / NBRC 16432 / NCIMB 13614 / HKI 0122).